We begin with the raw amino-acid sequence, 390 residues long: Elongation factor Ts, mitochondrial (390 aa).

The protein belongs to the EF-Ts family.

The protein localises to the mitochondrion. In terms of biological role, associates with the EF-Tu.GDP complex and induces the exchange of GDP to GTP. It remains bound to the aminoacyl-tRNA.EF-Tu.GTP complex up to the GTP hydrolysis stage on the ribosome. The sequence is that of Elongation factor Ts, mitochondrial from Plasmodium falciparum (isolate 3D7).